The chain runs to 1613 residues: Reverse gyrase (1613 aa).

The segment at 1–38 adopts an RG N-terminal-type zinc-finger fold; sequence MIPMIYKEMCPNCNGEITSERLAIGVCEKCLKEENVFE. Residues Cys10, Cys13, Cys27, and Cys30 each coordinate Zn(2+). ATP contacts are provided by residues Gln83 and 100-107; that span reads VPTGVGKS. The 205-residue stretch at 87–291 folds into the Helicase ATP-binding domain; it reads AKRVLKNKSF…LYRELLDFEI (205 aa). The DEAD box motif lies at 203-206; that stretch reads DDVD. Positions 310–525 constitute a Helicase C-terminal domain; the sequence is SKEKILEYIK…IDEVNLEELI (216 aa). The segment at 546–1613 is topoisomerase I; the sequence is DLLKSVLMVV…ALHEEILSIR (1068 aa). The Toprim domain occupies 550-712; sequence SVLMVVESPN…NIYRVGFNEI (163 aa). Residues Glu556 and Asp681 each coordinate Mg(2+). Positions 733 to 1613 constitute a Topo IA-type catalytic domain; sequence DENKVKGQVV…ALHEEILSIR (881 aa). A DOD-type homing endonuclease domain is found at 1070-1199; it reads FAGLVLGDGS…IGIYLNSIGI (130 aa). The active-site O-(5'-phospho-DNA)-tyrosine intermediate is the Tyr1363.

The protein in the N-terminal section; belongs to the DEAD box helicase family. DDVD subfamily. This sequence in the C-terminal section; belongs to the type IA topoisomerase family. As to quaternary structure, monomer. Requires Zn(2+) as cofactor. It depends on Mg(2+) as a cofactor. This protein undergoes a protein self splicing that involves a post-translational excision of the intervening region (intein) followed by peptide ligation.

The protein resides in the cytoplasm. It carries out the reaction ATP + H2O = ADP + phosphate + H(+). In terms of biological role, modifies the topological state of DNA by introducing positive supercoils in an ATP-dependent process, increasing the linking number in steps of +1. Binds to single-stranded DNA, transiently cleaves and then rejoins the ends, introducing a positive supercoil in the process. The scissile phosphodiester is attacked by the catalytic tyrosine of the enzyme, resulting in the formation of a DNA-(5'-phosphotyrosyl)-enzyme intermediate. Probably involved in rewinding DNA strands in regions of the chromosome that have opened up to allow replication, transcription, DNA repair and/or for DNA protection. In Methanocaldococcus jannaschii (strain ATCC 43067 / DSM 2661 / JAL-1 / JCM 10045 / NBRC 100440) (Methanococcus jannaschii), this protein is Reverse gyrase.